A 162-amino-acid polypeptide reads, in one-letter code: Colicin V production protein (162 aa).

A helical transmembrane segment spans residues 1–21; that stretch reads MVWIDYAIIAVIAFSSLVSLI. Over 22–31 the chain is Cytoplasmic; it reads RGFVREALSL. A helical membrane pass occupies residues 32 to 52; sequence VTWGCAFFVASHYYTYLSVWF. At 53-63 the chain is on the periplasmic side; it reads TGFEDELVRNG. A helical membrane pass occupies residues 64–84; it reads IAIAVLFIATLIVGAIVNFVI. Over 85-98 the chain is Cytoplasmic; the sequence is GQLVEKTGLSGTDR. The helical transmembrane segment at 99 to 119 threads the bilayer; that stretch reads VLGVCFGALRGVLIVAAILFF. Residues 120–162 are Periplasmic-facing; the sequence is LDSFTGVSKSEDWSKSQLIPQFSFIIRCFFDYLQSSSSFLPRA.

It localises to the cell inner membrane. In terms of biological role, required for colicin V production from plasmid IncFI ColV3-K30. The polypeptide is Colicin V production protein (cvpA) (Escherichia coli (strain K12)).